The sequence spans 3848 residues: Intermembrane lipid transfer protein tipC (3848 aa).

The region spanning 4–112 is the Chorein N-terminal domain; that stretch reads HIAASVLTKY…KFQDEKQAKL (109 aa). 12 disordered regions span residues 243 to 268, 450 to 481, 966 to 985, 1174 to 1219, 1326 to 1345, 1907 to 1926, 2024 to 2047, 2209 to 2290, 2330 to 2353, 2509 to 2541, 3209 to 3228, and 3310 to 3342; these read IKKE…DEIE, LKLQ…TGGG, QQLQ…SPPL, KNNQ…NNNS, ERKL…GVST, ENIN…TTTT, DDYN…NQLP, IKPA…NKNL, FNPK…SPLL, KQLN…NLLG, GITN…NNND, and INQQ…NTTQ. Composition is skewed to low complexity over residues 251 to 260 and 452 to 477; these read QQQQQQQQQG and LQQQ…PSTS. A compositionally biased stretch (low complexity) spans 1175 to 1190; sequence NNQNNNQNNNQNNNQN. The segment covering 1191–1200 has biased composition (polar residues); sequence INESSPTVFI. Pro residues predominate over residues 1202–1211; the sequence is SPPPPPPPPL. Low complexity predominate over residues 1333–1345; the sequence is TSPTTPSSSGVST. 3 stretches are compositionally biased toward low complexity: residues 2029-2044, 2217-2289, and 2335-2353; these read DNYN…NSNN, NNNN…NNKN, and SSSS…SPLL. Composition is skewed to low complexity over residues 3212–3228 and 3311–3342; these read NDPN…NNND and NQQP…NTTQ.

Belongs to the VPS13 family.

The protein resides in the membrane. In terms of biological role, mediates the transfer of lipids between membranes at organelle contact sites. The chain is Intermembrane lipid transfer protein tipC (tipC) from Dictyostelium discoideum (Social amoeba).